The primary structure comprises 513 residues: Cytochrome P450 72A552 (513 aa).

The chain crosses the membrane as a helical span at residues glutamate 2 to tryptophan 22. Residue cysteine 460 coordinates heme.

It belongs to the cytochrome P450 family. The cofactor is heme.

It localises to the membrane. The catalysed reaction is oleanolate + reduced [NADPH--hemoprotein reductase] + O2 = hederagenin + oxidized [NADPH--hemoprotein reductase] + H2O + H(+). In terms of biological role, catalyzes the oxidation of oleanolate at the C-23 position to form hederagenin. The polypeptide is Cytochrome P450 72A552 (Barbarea vulgaris (Yellow rocket)).